The sequence spans 245 residues: Orotidine 5'-phosphate decarboxylase (245 aa).

Substrate is bound by residues Asp22, Lys44, 71–80 (DLKFHDIPNT), Thr131, Arg192, Gln201, Gly221, and Arg222. Lys73 (proton donor) is an active-site residue.

This sequence belongs to the OMP decarboxylase family. Type 1 subfamily. In terms of assembly, homodimer.

It catalyses the reaction orotidine 5'-phosphate + H(+) = UMP + CO2. Its pathway is pyrimidine metabolism; UMP biosynthesis via de novo pathway; UMP from orotate: step 2/2. Catalyzes the decarboxylation of orotidine 5'-monophosphate (OMP) to uridine 5'-monophosphate (UMP). This is Orotidine 5'-phosphate decarboxylase from Salmonella paratyphi A (strain ATCC 9150 / SARB42).